Consider the following 439-residue polypeptide: N5-carboxyaminoimidazole ribonucleotide synthase (439 aa).

ATP contacts are provided by residues Lys-113, Lys-160, 197–200, Glu-205, and 283–284; these read EERV and NE. Residues 117–313 enclose the ATP-grasp domain; that stretch reads RRRLAALGAA…QFEQHLRAVL (197 aa).

This sequence belongs to the PurK/PurT family. Homodimer.

It carries out the reaction 5-amino-1-(5-phospho-beta-D-ribosyl)imidazole + hydrogencarbonate + ATP = 5-carboxyamino-1-(5-phospho-D-ribosyl)imidazole + ADP + phosphate + 2 H(+). Its pathway is purine metabolism; IMP biosynthesis via de novo pathway; 5-amino-1-(5-phospho-D-ribosyl)imidazole-4-carboxylate from 5-amino-1-(5-phospho-D-ribosyl)imidazole (N5-CAIR route): step 1/2. Its function is as follows. Catalyzes the ATP-dependent conversion of 5-aminoimidazole ribonucleotide (AIR) and HCO(3)(-) to N5-carboxyaminoimidazole ribonucleotide (N5-CAIR). In Mycobacterium leprae (strain TN), this protein is N5-carboxyaminoimidazole ribonucleotide synthase.